The sequence spans 239 residues: Small ribosomal subunit protein eS4 (239 aa).

One can recognise an S4 RNA-binding domain in the interval 37–99 (IPLAVVIRDY…ADLYFRVIPD (63 aa)).

Belongs to the eukaryotic ribosomal protein eS4 family.

In Saccharolobus islandicus (strain Y.N.15.51 / Yellowstone #2) (Sulfolobus islandicus), this protein is Small ribosomal subunit protein eS4.